The chain runs to 355 residues: NADH dehydrogenase [ubiquinone] 1 alpha subcomplex subunit 10, mitochondrial (355 aa).

The N-terminal 35 residues, 1-35 (MALRLLRLVPASASARGLAAGAQRVGRIHTSVHCK), are a transit peptide targeting the mitochondrion. N6-acetyllysine; alternate is present on Lys-122. N6-succinyllysine; alternate is present on Lys-122. Phosphoserine; by PINK1 is present on Ser-250. Lys-285 is subject to N6-succinyllysine.

Belongs to the complex I NDUFA10 subunit family. In terms of assembly, complex I is composed of 45 different subunits. This a component of the hydrophobic protein fraction. FAD serves as cofactor. In terms of processing, phosphorylation at Ser-250 by PINK1 is required for the binding and/or reduction of the complex I substrate ubiquinone. As to expression, expressed in the head and flagellum of epididymal sperm but not in testicular sperm (at protein level).

Its subcellular location is the mitochondrion matrix. Its function is as follows. Accessory subunit of the mitochondrial membrane respiratory chain NADH dehydrogenase (Complex I), that is believed not to be involved in catalysis. Complex I functions in the transfer of electrons from NADH to the respiratory chain. The immediate electron acceptor for the enzyme is believed to be ubiquinone. The protein is NADH dehydrogenase [ubiquinone] 1 alpha subcomplex subunit 10, mitochondrial (Ndufa10) of Rattus norvegicus (Rat).